Here is a 190-residue protein sequence, read N- to C-terminus: B3 domain-containing protein At4g01580 (190 aa).

A disordered region spans residues 1-25 (MVITRNMKARATSVSHRQSQQDPES). Residues 12–23 (TSVSHRQSQQDP) are compositionally biased toward polar residues. The TF-B3 DNA-binding region spans 29-122 (KFFKLVLPST…SFRVIIFNAS (94 aa)).

It is found in the nucleus. The sequence is that of B3 domain-containing protein At4g01580 from Arabidopsis thaliana (Mouse-ear cress).